Here is a 92-residue protein sequence, read N- to C-terminus: UPF0298 protein ABC2380 (92 aa).

The protein belongs to the UPF0298 family.

The protein localises to the cytoplasm. This Shouchella clausii (strain KSM-K16) (Alkalihalobacillus clausii) protein is UPF0298 protein ABC2380.